We begin with the raw amino-acid sequence, 498 residues long: Glycerol kinase (498 aa).

An ADP-binding site is contributed by threonine 12. ATP contacts are provided by threonine 12, threonine 13, and serine 14. Threonine 12 contributes to the sn-glycerol 3-phosphate binding site. Arginine 16 lines the ADP pocket. Sn-glycerol 3-phosphate-binding residues include arginine 82, glutamate 83, tyrosine 134, and aspartate 244. Positions 82, 83, 134, 244, and 245 each coordinate glycerol. ADP-binding residues include threonine 266 and glycine 310. 4 residues coordinate ATP: threonine 266, glycine 310, glutamine 314, and glycine 411. ADP is bound by residues glycine 411 and asparagine 415.

It belongs to the FGGY kinase family.

It carries out the reaction glycerol + ATP = sn-glycerol 3-phosphate + ADP + H(+). It participates in polyol metabolism; glycerol degradation via glycerol kinase pathway; sn-glycerol 3-phosphate from glycerol: step 1/1. Its activity is regulated as follows. Inhibited by fructose 1,6-bisphosphate (FBP). Its function is as follows. Key enzyme in the regulation of glycerol uptake and metabolism. Catalyzes the phosphorylation of glycerol to yield sn-glycerol 3-phosphate. This chain is Glycerol kinase, found in Azorhizobium caulinodans (strain ATCC 43989 / DSM 5975 / JCM 20966 / LMG 6465 / NBRC 14845 / NCIMB 13405 / ORS 571).